Consider the following 825-residue polypeptide: Neuroligin-3 (825 aa).

The first 34 residues, 1–34 (MWLQPSLSLSPTPTVGRSLCLTLGFLSLVLRAST), serve as a signal peptide directing secretion. At 35–686 (QAPAPTVNTH…NPRDYSTELS (652 aa)) the chain is on the extracellular side. A glycan (N-linked (GlcNAc...) asparagine) is linked at Asn95. A disulfide bond links Cys103 and Cys138. The interval 151-172 (SGAKKQGEDLADNDGDEDEDIR) is disordered. Acidic residues predominate over residues 159–171 (DLADNDGDEDEDI). Disulfide bonds link Cys317-Cys328 and Cys487-Cys521. Asn522 carries N-linked (GlcNAc...) asparagine glycosylation. Composition is skewed to polar residues over residues 622 to 633 (TKVPPPDTTHSS) and 654 to 666 (AYSNENAPGSWNG). The tract at residues 622 to 668 (TKVPPPDTTHSSHITRRPNGKTWSTKRPAISPAYSNENAPGSWNGDQ) is disordered. Residues 687–707 (VTIAVGASLLFLNVLAFAALY) form a helical membrane-spanning segment. Residues 708–825 (YRKDKRRQEP…LPHSHSTTRV (118 aa)) lie on the Cytoplasmic side of the membrane. A Phosphoserine modification is found at Ser722. Tyr769 carries the phosphotyrosine modification.

The protein belongs to the type-B carboxylesterase/lipase family. In terms of assembly, homodimer, and heterodimer with NLGN1 and NLGN2. Interacts with neurexins NRXN1, NRXN2 and NRXN3. Interaction with neurexins is mediated by heparan sulfate glycan modification on neurexin. Interacts (via its C-terminus) with DLG4/PSD-95 (via PDZ domain 3). In terms of tissue distribution, brain and arteries (at protein level). Detected in heart, brain, spleen, lung, liver, skeletal muscle, kidney and testis. Expressed in olfactory bulb and olfactory epithelium. Found in olfactory ensheathing glia but not in olfactory neurons, and in developing peripheral glia.

It is found in the cell membrane. The protein localises to the synapse. Functionally, cell surface protein involved in cell-cell-interactions via its interactions with neurexin family members. Plays a role in synapse function and synaptic signal transmission, and probably mediates its effects by recruiting and clustering other synaptic proteins. May promote the initial formation of synapses, but is not essential for this. May also play a role in glia-glia or glia-neuron interactions in the developing peripheral nervous system. The polypeptide is Neuroligin-3 (Nlgn3) (Mus musculus (Mouse)).